The following is a 558-amino-acid chain: Membrane protein insertase YidC (558 aa).

The next 6 helical transmembrane spans lie at 6–26 (VIAAISLSAAVIILYSLFFQP), 326–348 (LAIDWGFMYFITKPLFFVLDYFF), 355–377 (GLAIIAVTICIRLAFFPLANFSF), 424–444 (LPILVQIPVFFALYKVLFVTI), 469–489 (VFGLIPWDPPSFLLIGAWPII), and 512–532 (IFMFFPVFLTVILAPFPAGLV).

The protein belongs to the OXA1/ALB3/YidC family. Type 1 subfamily. Interacts with the Sec translocase complex via SecD. Specifically interacts with transmembrane segments of nascent integral membrane proteins during membrane integration.

Its subcellular location is the cell inner membrane. Functionally, required for the insertion and/or proper folding and/or complex formation of integral membrane proteins into the membrane. Involved in integration of membrane proteins that insert both dependently and independently of the Sec translocase complex, as well as at least some lipoproteins. Aids folding of multispanning membrane proteins. This chain is Membrane protein insertase YidC, found in Pelagibacter ubique (strain HTCC1062).